Reading from the N-terminus, the 492-residue chain is DEAD-box ATP-dependent RNA helicase RhpA (492 aa).

A Q motif motif is present at residues 20–48; sequence PSFNDLGLKESVLKSVYEAGFTSPSPIQE. Positions 51-220 constitute a Helicase ATP-binding domain; the sequence is IPAVLQGRDV…DKILENPIKI (170 aa). An ATP-binding site is contributed by 64–71; the sequence is AQTGTGKT. The short motif at 168-171 is the DEAD box element; the sequence is DESD. One can recognise a Helicase C-terminal domain in the interval 231–393; it reads DITQRFYVIN…EIPTINENQI (163 aa). The disordered stretch occupies residues 445-492; sequence AIQNPKEKTPKPSHKKTPQHERARSFKKGQHRDRHPKTNHHSKKPKRR. The segment covering 469 to 492 has biased composition (basic residues); the sequence is SFKKGQHRDRHPKTNHHSKKPKRR.

Belongs to the DEAD box helicase family. As to quaternary structure, homodimer. Interacts with RNase J (rnj), might be a member of a minimal RNA degradosome complex.

Its subcellular location is the cytoplasm. It carries out the reaction ATP + H2O = ADP + phosphate + H(+). Its function is as follows. DEAD-box RNA helicase probably involved in RNA degradation. Unwinds dsRNA in both 5'- and 3'-directions. Background RNA-dependent ATPase activity is stimulated about 5-fold by RNaseJ (rnj). Stimulates the dsRNase activity of RNase J. The sequence is that of DEAD-box ATP-dependent RNA helicase RhpA (rhpA) from Helicobacter pylori (strain B128).